A 353-amino-acid chain; its full sequence is Photosystem II D2 protein (353 aa).

Position 2 is an N-acetylthreonine (Thr-2). A Phosphothreonine modification is found at Thr-2. The chain crosses the membrane as a helical span at residues 41-61 (CAYFALGGWFTGTTFVTSWYT). His-118 is a chlorophyll a binding site. Residues 125–141 (GFMLRQFELARSVQLRP) traverse the membrane as a helical segment. Positions 130 and 143 each coordinate pheophytin a. A helical transmembrane segment spans residues 153-166 (VFVSVFFIYPLGQS). His-198 is a chlorophyll a binding site. Residues 208–228 (AALLCAIHGATVENTLFEDGD) traverse the membrane as a helical segment. Positions 215 and 262 each coordinate a plastoquinone. His-215 lines the Fe cation pocket. His-269 lines the Fe cation pocket. A helical membrane pass occupies residues 279 to 295 (GLWMSALGVVGLALNLR).

It belongs to the reaction center PufL/M/PsbA/D family. PSII is composed of 1 copy each of membrane proteins PsbA, PsbB, PsbC, PsbD, PsbE, PsbF, PsbH, PsbI, PsbJ, PsbK, PsbL, PsbM, PsbT, PsbX, PsbY, PsbZ, Psb30/Ycf12, at least 3 peripheral proteins of the oxygen-evolving complex and a large number of cofactors. It forms dimeric complexes. It depends on The D1/D2 heterodimer binds P680, chlorophylls that are the primary electron donor of PSII, and subsequent electron acceptors. It shares a non-heme iron and each subunit binds pheophytin, quinone, additional chlorophylls, carotenoids and lipids. There is also a Cl(-1) ion associated with D1 and D2, which is required for oxygen evolution. The PSII complex binds additional chlorophylls, carotenoids and specific lipids. as a cofactor.

Its subcellular location is the plastid membrane. It catalyses the reaction 2 a plastoquinone + 4 hnu + 2 H2O = 2 a plastoquinol + O2. Its function is as follows. Photosystem II (PSII) is a light-driven water:plastoquinone oxidoreductase that uses light energy to abstract electrons from H(2)O, generating O(2) and a proton gradient subsequently used for ATP formation. It consists of a core antenna complex that captures photons, and an electron transfer chain that converts photonic excitation into a charge separation. The D1/D2 (PsbA/PsbD) reaction center heterodimer binds P680, the primary electron donor of PSII as well as several subsequent electron acceptors. D2 is needed for assembly of a stable PSII complex. This Cuscuta exaltata (Tall dodder) protein is Photosystem II D2 protein.